Reading from the N-terminus, the 562-residue chain is Protein KASH5 (562 aa).

Over 1 to 521 (MDLPEGPVGG…PQRLRVTRHP (521 aa)) the chain is Cytoplasmic. A disordered region spans residues 125-153 (ALTSRQLPSGCPEAEEPANLESFGGEDPR). The stretch at 164 to 349 (SSLEDLELSN…LEEQLSQTYE (186 aa)) forms a coiled coil. The interval 407-481 (ETSEETEFPS…DIPENPPERP (75 aa)) is disordered. Residues 431-448 (AHPEEGRKEPSMWLTRRE) show a composition bias toward basic and acidic residues. A helical; Anchor for type IV membrane protein membrane pass occupies residues 522–542 (LIPAPVLGLLLLLLLSVLLLG). The interaction with SUN1 stretch occupies residues 541-562 (LGPSPPPTWPHLQLCYLQPPPV). Residues 543–562 (PSPPPTWPHLQLCYLQPPPV) lie on the Perinuclear space side of the membrane.

As to quaternary structure, core component the LINC complex which is composed of inner nuclear membrane SUN domain-containing proteins coupled to outer nuclear membrane KASH domain-containing nesprins. SUN and KASH domain-containing proteins seem to bind each other promiscuously; however, differentially expression of LINC complex constituents is giving rise to specific assemblies. At least SUN1/2-containing core LINC complexes are proposed to be hexameric composed of three protomers of each KASH and SUN domain-containing protein. Interacts with SUN1; this interaction mediates its telomere localization by forming a SUN1:KASH5 LINC complex. Component of a probable SUN2:KASH5 LINC complex. Self-associates. Interacts with DYNC1H1, DCTN1, DYNC1I1/2 and PAFAH1B1; suggesting the association with the dynein-dynactin motor complex. Expressed in testis (at protein level).

Its subcellular location is the nucleus outer membrane. It localises to the nucleus. The protein resides in the chromosome. The protein localises to the telomere. It is found in the nucleus envelope. In terms of biological role, as a component of the LINC (LInker of Nucleoskeleton and Cytoskeleton) complex, involved in the connection between the nuclear lamina and the cytoskeleton. The nucleocytoplasmic interactions established by the LINC complex play an important role in the transmission of mechanical forces across the nuclear envelope and in nuclear movement and positioning. Required for telomere attachment to nuclear envelope in the prophase of meiosis. Required for rapid telomere prophase movements implicating a SUN1/2:KASH5 LINC complex in which SUN1 and SUN2 seem to act at least partial redundantly. Required for homolog pairing during meiotic prophase in spermatocytes and probably oocytes. Essential for male and female gametogenesis. Recruits cytoplasmic dynein to telomere attachment sites at the nuclear envelope in spermatocytes. In oocytes is involved in meiotic resumption and spindle formation. This chain is Protein KASH5, found in Homo sapiens (Human).